The chain runs to 504 residues: Hexokinase-10 (504 aa).

Residues 7–29 traverse the membrane as a helical segment; that stretch reads GWVRVAAVGWAVAACAVAAGMVA. The 455-residue stretch at 39-493 folds into the Hexokinase domain; the sequence is NRAVAVVRDL…SGTGAALLAA (455 aa). The hexokinase small subdomain stretch occupies residues 94-226; the sequence is DGSEEGISYA…GLNMKVNVLV (133 aa). Gly108 and Thr109 together coordinate ADP. Positions 192, 193, 227, 254, 282, and 313 each coordinate D-glucose. A hexokinase large subdomain region spans residues 227–482; the sequence is NNTVGTLALG…ATVSLRVMEE (256 aa). Gly447 serves as a coordination point for ADP.

The protein belongs to the hexokinase family. Expressed specifically in stamen.

The protein resides in the plastid. The protein localises to the chloroplast outer membrane. The catalysed reaction is a D-hexose + ATP = a D-hexose 6-phosphate + ADP + H(+). It carries out the reaction D-fructose + ATP = D-fructose 6-phosphate + ADP + H(+). It catalyses the reaction D-glucose + ATP = D-glucose 6-phosphate + ADP + H(+). It functions in the pathway carbohydrate metabolism; hexose metabolism. The protein operates within carbohydrate degradation; glycolysis; D-glyceraldehyde 3-phosphate and glycerone phosphate from D-glucose: step 1/4. Its function is as follows. Fructose and glucose phosphorylating enzyme. The polypeptide is Hexokinase-10 (HXK10) (Oryza sativa subsp. japonica (Rice)).